A 368-amino-acid chain; its full sequence is Dual-specificity RNA methyltransferase RlmN (368 aa).

Glu94 functions as the Proton acceptor in the catalytic mechanism. The Radical SAM core domain occupies 100-334 (EEDRATLCVS…VIVRKTRGDD (235 aa)). A disulfide bridge connects residues Cys107 and Cys339. Cys114, Cys118, and Cys121 together coordinate [4Fe-4S] cluster. S-adenosyl-L-methionine contacts are provided by residues 163-164 (GE), Ser195, 217-219 (SLH), and Asn296. Catalysis depends on Cys339, which acts as the S-methylcysteine intermediate.

This sequence belongs to the radical SAM superfamily. RlmN family. [4Fe-4S] cluster serves as cofactor.

Its subcellular location is the cytoplasm. The catalysed reaction is adenosine(2503) in 23S rRNA + 2 reduced [2Fe-2S]-[ferredoxin] + 2 S-adenosyl-L-methionine = 2-methyladenosine(2503) in 23S rRNA + 5'-deoxyadenosine + L-methionine + 2 oxidized [2Fe-2S]-[ferredoxin] + S-adenosyl-L-homocysteine. It carries out the reaction adenosine(37) in tRNA + 2 reduced [2Fe-2S]-[ferredoxin] + 2 S-adenosyl-L-methionine = 2-methyladenosine(37) in tRNA + 5'-deoxyadenosine + L-methionine + 2 oxidized [2Fe-2S]-[ferredoxin] + S-adenosyl-L-homocysteine. Functionally, specifically methylates position 2 of adenine 2503 in 23S rRNA and position 2 of adenine 37 in tRNAs. m2A2503 modification seems to play a crucial role in the proofreading step occurring at the peptidyl transferase center and thus would serve to optimize ribosomal fidelity. This chain is Dual-specificity RNA methyltransferase RlmN, found in Aeromonas salmonicida (strain A449).